Reading from the N-terminus, the 140-residue chain is MAKKVVGIVKVRIPGGEATPAPPLGPALGQKQIQIAAFVKDFNAKTSKMKGQLLNTYITVYEDKTYTFVTKGTSTSTLIKKKLGIEKGSGEPNKTKVATINQKQLEEIAQEKMAYMSANDIEAAKKIVAGTARAMGIKVE.

It belongs to the universal ribosomal protein uL11 family. As to quaternary structure, part of the ribosomal stalk of the 50S ribosomal subunit. Interacts with L10 and the large rRNA to form the base of the stalk. L10 forms an elongated spine to which L12 dimers bind in a sequential fashion forming a multimeric L10(L12)X complex. Post-translationally, one or more lysine residues are methylated.

Its function is as follows. Forms part of the ribosomal stalk which helps the ribosome interact with GTP-bound translation factors. The chain is Large ribosomal subunit protein uL11 from Brachyspira hyodysenteriae (strain ATCC 49526 / WA1).